A 243-amino-acid polypeptide reads, in one-letter code: Purine nucleoside phosphorylase YfiH (243 aa).

Zn(2+)-binding residues include His71, Cys107, and His124.

The protein belongs to the purine nucleoside phosphorylase YfiH/LACC1 family. Homodimer. Cu(2+) is required as a cofactor. It depends on Zn(2+) as a cofactor.

It catalyses the reaction adenosine + phosphate = alpha-D-ribose 1-phosphate + adenine. The enzyme catalyses S-methyl-5'-thioadenosine + phosphate = 5-(methylsulfanyl)-alpha-D-ribose 1-phosphate + adenine. The catalysed reaction is inosine + phosphate = alpha-D-ribose 1-phosphate + hypoxanthine. It carries out the reaction adenosine + H2O + H(+) = inosine + NH4(+). Its function is as follows. Purine nucleoside enzyme that catalyzes the phosphorolysis of adenosine and inosine nucleosides, yielding D-ribose 1-phosphate and the respective free bases, adenine and hypoxanthine. Also catalyzes the phosphorolysis of S-methyl-5'-thioadenosine into adenine and S-methyl-5-thio-alpha-D-ribose 1-phosphate. Also has adenosine deaminase activity. May also act as a polyphenol oxidase: able to oxidize syringaldazine and 2,2'-azino-bis(3-ethylbenzthiazoline-6-sulfonic acid) (ABTS) in vitro. The protein is Purine nucleoside phosphorylase YfiH of Escherichia coli (strain K12).